The sequence spans 298 residues: MENFQKVEKIGEGTYGVVYKARNKLTGEVVALKKIRLDTETEGVPSTAIREISLLKELNHPNIVKLLDVIHTENKLYLVFEFLHQDLKKFMDASALTGIPLPLIKSYLFQLLQGLAFCHSHRVLHRDLKPQNLLINTEGAIKLADFGLARAFGVPVRTYTHEVVTLWYRAPEILLGCKYYSTAVDIWSLGCIFAEMVTRRALFPGDSEIDQLFRIFRTLGTPDEVVWPGVTSMPDYKPSFPKWARQDFSKVVPPLDEDGRSLLSQMLHYDPNKRISAKAALAHPFFQDVTKPVPHLRL.

Position 1 is an N-acetylmethionine (Met-1). Residues 4–286 (FQKVEKIGEG…AKAALAHPFF (283 aa)) enclose the Protein kinase domain. Lys-6 carries the post-translational modification N6-acetyllysine. 10–18 (IGEGTYGVV) lines the ATP pocket. Thr-14 carries the post-translational modification Phosphothreonine. The residue at position 15 (Tyr-15) is a Phosphotyrosine; by WEE1. Tyr-19 is modified (phosphotyrosine). Residues Lys-33, 81–83 (EFL), and Asp-86 each bind ATP. Asp-127 serves as the catalytic Proton acceptor. Residues 129 to 132 (KPQN) and Asp-145 contribute to the ATP site. The Mg(2+) site is built by Asn-132 and Asp-145. Thr-160 bears the Phosphothreonine; by CAK and CCRK mark.

The protein belongs to the protein kinase superfamily. CMGC Ser/Thr protein kinase family. CDC2/CDKX subfamily. Found in a complex with CABLES1, CCNA1 and CCNE1. Interacts with CABLES1. Interacts with UHRF2. Part of a complex consisting of UHRF2, CDK2 and CCNE1. Interacts with the Speedy/Ringo proteins SPDYA and SPDYC. Interaction with SPDYA promotes kinase activation via a conformation change that alleviates obstruction of the substrate-binding cleft by the T-loop. Found in a complex with both SPDYA and CDKN1B/KIP1. Binds to RB1 and CDK7. Binding to CDKN1A (p21) leads to CDK2/cyclin E inactivation at the G1-S phase DNA damage checkpoint, thereby arresting cells at the G1-S transition during DNA repair. Associated with PTPN6 and beta-catenin/CTNNB1. Interacts with CACUL1. May interact with CEP63. Interacts with ANKRD17. Interacts with CEBPA (when phosphorylated). Forms a ternary complex with CCNA2 and CDKN1B; CDKN1B inhibits the kinase activity of CDK2 through conformational rearrangements. Interacts with cyclins A, B1, B3, D, or E. Interacts with CDK2AP2. The cofactor is Mg(2+). Phosphorylated at Thr-160 by CDK7 in a CAK complex. Phosphorylation at Thr-160 promotes kinase activity, whereas phosphorylation at Tyr-15 by WEE1 reduces slightly kinase activity. Phosphorylated on Thr-14 and Tyr-15 during S and G2 phases before being dephosphorylated by CDC25A. In terms of processing, nitrosylated after treatment with nitric oxide (DETA-NO).

The protein localises to the cytoplasm. The protein resides in the cytoskeleton. It is found in the microtubule organizing center. Its subcellular location is the centrosome. It localises to the nucleus. The protein localises to the cajal body. The protein resides in the endosome. It catalyses the reaction L-seryl-[protein] + ATP = O-phospho-L-seryl-[protein] + ADP + H(+). It carries out the reaction L-threonyl-[protein] + ATP = O-phospho-L-threonyl-[protein] + ADP + H(+). With respect to regulation, phosphorylation at Thr-14 or Tyr-15 inactivates the enzyme, while phosphorylation at Thr-160 activates it. Inhibited by 1,25-dihydroxyvitamin D(3) (1,25-(OH)(2)D(3)), AG-024322, N-(4-Piperidinyl)-4-(2,6-dichlorobenzoylamino)-1H-pyrazole-3-carboxamide (AT7519), R547 (Ro-4584820), purine, pyrimidine and pyridine derivatives, 2-aminopyrimidines, paullones, thiazo derivatives, macrocyclic quinoxalin-2-one, pyrazolo[1,5-a]-1,3,5-triazine, pyrazolo[1,5-a]pyrimidine, 2-(1-ethyl-2-hydroxyethylamino)-6-benzylamino-9-isopropylpurine (roscovitine, seliciclib and CYC202), SNS-032 (BMS-387032), triazolo[1,5-a]pyrimidines, staurosporine and olomoucine. Stimulated by MYC. Inactivated by CDKN1A (p21). Its function is as follows. Serine/threonine-protein kinase involved in the control of the cell cycle; essential for meiosis, but dispensable for mitosis. Phosphorylates CABLES1, CTNNB1, CDK2AP2, ERCC6, NBN, USP37, p53/TP53, NPM1, CDK7, RB1, BRCA2, MYC, NPAT, EZH2. Triggers duplication of centrosomes and DNA. Acts at the G1-S transition to promote the E2F transcriptional program and the initiation of DNA synthesis, and modulates G2 progression; controls the timing of entry into mitosis/meiosis by controlling the subsequent activation of cyclin B/CDK1 by phosphorylation, and coordinates the activation of cyclin B/CDK1 at the centrosome and in the nucleus. Crucial role in orchestrating a fine balance between cellular proliferation, cell death, and DNA repair in embryonic stem cells (ESCs). Activity of CDK2 is maximal during S phase and G2; activated by interaction with cyclin E during the early stages of DNA synthesis to permit G1-S transition, and subsequently activated by cyclin A2 (cyclin A1 in germ cells) during the late stages of DNA replication to drive the transition from S phase to mitosis, the G2 phase. EZH2 phosphorylation promotes H3K27me3 maintenance and epigenetic gene silencing. Cyclin E/CDK2 prevents oxidative stress-mediated Ras-induced senescence by phosphorylating MYC. Involved in G1-S phase DNA damage checkpoint that prevents cells with damaged DNA from initiating mitosis; regulates homologous recombination-dependent repair by phosphorylating BRCA2, this phosphorylation is low in S phase when recombination is active, but increases as cells progress towards mitosis. In response to DNA damage, double-strand break repair by homologous recombination a reduction of CDK2-mediated BRCA2 phosphorylation. Involved in regulation of telomere repair by mediating phosphorylation of NBN. Phosphorylation of RB1 disturbs its interaction with E2F1. NPM1 phosphorylation by cyclin E/CDK2 promotes its dissociates from unduplicated centrosomes, thus initiating centrosome duplication. Cyclin E/CDK2-mediated phosphorylation of NPAT at G1-S transition and until prophase stimulates the NPAT-mediated activation of histone gene transcription during S phase. Required for vitamin D-mediated growth inhibition by being itself inactivated. Involved in the nitric oxide- (NO) mediated signaling in a nitrosylation/activation-dependent manner. USP37 is activated by phosphorylation and thus triggers G1-S transition. CTNNB1 phosphorylation regulates insulin internalization. Phosphorylates FOXP3 and negatively regulates its transcriptional activity and protein stability. Phosphorylates ERCC6 which is essential for its chromatin remodeling activity at DNA double-strand breaks. Acts as a regulator of the phosphatidylinositol 3-kinase/protein kinase B signal transduction by mediating phosphorylation of the C-terminus of protein kinase B (PKB/AKT1 and PKB/AKT2), promoting its activation. This Homo sapiens (Human) protein is Cyclin-dependent kinase 2 (CDK2).